Here is a 4168-residue protein sequence, read N- to C-terminus: Centrosome-associated protein ALMS1 (4168 aa).

The span at 1 to 29 (MEPEDLPWPGELEEEEEEEEEEEEEEEEA) shows a compositional bias: acidic residues. The disordered stretch occupies residues 1–69 (MEPEDLPWPG…YGPQHLESID (69 aa)). The span at 30–40 (AAAAAANVDDV) shows a compositional bias: low complexity. Residues 49–58 (EAGRELDSDS) are compositionally biased toward basic and acidic residues. The residue at position 464 (Ser-464) is a Phosphoserine. 34 tandem repeats follow at residues 539-585 (QKTL…SIFY), 586-632 (QQGL…GTFY), 633-679 (QQEL…LFFY), 680-726 (RQTL…GIFY), 727-774 (QQEF…SILY), 775-821 (PQDL…LVFY), 822-871 (QQAL…SAFY), 872-918 (QQTL…IIFS), 919-965 (QQTL…SVFY), 966-1013 (QQEL…SIFY), 1014-1060 (QQEW…SVLY), 1061-1107 (PQVL…GIFY), 1108-1155 (QQTL…SIFH), 1156-1202 (QQAL…GIFY), 1203-1249 (QQTL…GIFY), 1250-1297 (QQVL…SIFY), 1298-1344 (QQSL…GVFY), 1345-1392 (QQVL…SIFY), 1393-1439 (QQSL…GSFY), 1440-1486 (QQVL…IVIY), 1487-1534 (KQAF…GSFY), 1535-1581 (QLAL…IVNY), 1582-1628 (KQAF…ITFY), 1629-1675 (RQAL…VIFY), 1676-1722 (QQTL…IVFY), 1723-1769 (QQAL…NISY), 1770-1816 (QQEL…IVSY), 1817-1861 (QREL…VISY), 1862-1906 (EQEL…SIFH), 1907-1951 (QQEL…SVIS), 1952-1999 (QQEL…LKIS), 2060-2105 (QQLP…NIFS), 2106-2152 (PQEL…DIFY), and 2153-2200 (QKDL…LVSE). Residues 539-2200 (QKTLADTHLT…HGENHKLVSE (1662 aa)) form a 34 X 47 AA approximate tandem repeat region. Disordered regions lie at residues 558-579 (PEPA…SHRG) and 606-625 (GLAD…YSHR). 2 stretches are compositionally biased toward polar residues: residues 564–574 (KTATPTVLSSS) and 609–622 (DQTT…STSY). Disordered regions lie at residues 699–718 (SGPA…PHSH) and 735–769 (QTEE…QREK). Residues 705-715 (KTGTATVLSTP) show a composition bias toward polar residues. A disordered region spans residues 841-865 (SGPADGKTGTPAVTSTSSASSSLGE). Disordered regions lie at residues 946–969 (GTPT…QQEL), 983–1007 (AIPG…SHRE), and 1027–1055 (LKVS…QREK). Residues 989–1003 (DQKTVPTPTVPSGSF) show a composition bias toward polar residues. A Phosphoserine modification is found at Ser-1189. A disordered region spans residues 1221-1241 (VLGPADQKTGTPTPTSASYSH). Residues 1228–1240 (KTGTPTPTSASYS) show a composition bias toward polar residues. The interval 1786–1806 (SNVPGPADQKTGVSTVTSTSY) is disordered. A compositionally biased stretch (low complexity) spans 1796 to 1806 (TGVSTVTSTSY). Ser-2143 carries the phosphoserine modification. Disordered regions lie at residues 2456-2477 (ITDS…SSVD) and 2600-2621 (HPCA…NPSS). Ser-2466 is modified (phosphoserine). Ser-2632 is modified (phosphoserine). Disordered stretches follow at residues 2753 to 2828 (HFTE…STRA), 2892 to 2912 (KAPR…QHQD), 3283 to 3310 (RQIP…AIAP), 3389 to 3426 (EAAQ…MKNL), 3566 to 3594 (QVRD…TTQH), and 3643 to 3704 (SLQV…HRAG). The segment covering 2754-2766 (FTEEQNPPRDLKQ) has biased composition (basic and acidic residues). The segment covering 2767–2779 (KTSSPSSFKMHSN) has biased composition (polar residues). Composition is skewed to basic and acidic residues over residues 2780-2793 (SQDK…EGRR) and 2800-2816 (VDFE…ERSD). At Ser-2805 the chain carries Phosphoserine. Residues 2817-2828 (FTGSHSEPSTRA) are compositionally biased toward polar residues. The segment covering 3294–3305 (DTTVESSHSGSN) has biased composition (polar residues). Positions 3392–3404 (QAKEKESLQKDTA) are enriched in basic and acidic residues. Over residues 3405–3416 (DSSAAAAAEHSA) the composition is skewed to low complexity. Basic and acidic residues-rich tracts occupy residues 3649–3664 (STHD…KEWS) and 3680–3694 (KSLE…ELKK). Residues 3695 to 3704 (SKVLSHHRAG) are compositionally biased toward basic residues. The segment at 4036–4167 (TLQESLQFHR…NQLLGRKVPW (132 aa)) is ALMS motif.

This sequence belongs to the ALMS1 family. As to expression, expressed in all tissues tested including adipose and pancreas. Expressed by beta-cells of the islets in the pancreas (at protein level).

Its subcellular location is the cytoplasm. It localises to the cytoskeleton. The protein localises to the microtubule organizing center. The protein resides in the centrosome. It is found in the cilium basal body. Its subcellular location is the spindle pole. Involved in PCM1-dependent intracellular transport. Required, directly or indirectly, for the localization of NCAPD2 to the proximal ends of centrioles. Required for proper formation and/or maintenance of primary cilia (PC), microtubule-based structures that protrude from the surface of epithelial cells. The polypeptide is Centrosome-associated protein ALMS1 (ALMS1) (Homo sapiens (Human)).